The sequence spans 370 residues: Prolactin-releasing peptide receptor (370 aa).

The interval 1–34 (MTSLPPGTTGDPDLFSGPSPAGSTPANQSAEASE) is disordered. At 1–62 (MTSLPPGTTG…LQLVHQLKGL (62 aa)) the chain is on the extracellular side. A compositionally biased stretch (polar residues) spans 21–34 (AGSTPANQSAEASE). N-linked (GlcNAc...) asparagine glycosylation is found at asparagine 27 and asparagine 36. Residues 63–83 (IVMLYSIVVVVGLVGNCLLVL) form a helical membrane-spanning segment. Over 84–101 (VIARVRRLHNVTNFLIGN) the chain is Cytoplasmic. The helical transmembrane segment at 102-122 (LALSDVLMCAACVPLTLAYAF) threads the bilayer. Residues 123–126 (EPRG) lie on the Extracellular side of the membrane. A helical membrane pass occupies residues 127–147 (WVFGGGLCHLVFFLQPVTVYV). Residues cysteine 134 and cysteine 211 are joined by a disulfide bond. The Cytoplasmic segment spans residues 148–175 (SVFTLTTIAVDRYVVLVHPLRRRISLKL). Residues 176 to 196 (SAYAVLGIWALSAVLALPAAV) traverse the membrane as a helical segment. Residues 197-223 (HTYHVELKPHDVRLCEEFWGSQERQRQ) are Extracellular-facing. Residues 224 to 244 (IYAWGLLLGTYLLPLLAILLS) form a helical membrane-spanning segment. Over 245–276 (YVRVSVKLRNRVVPGSVTQSQADWDRARRRRT) the chain is Cytoplasmic. Residues 277-297 (FCLLVVVVVVFALCWLPLHIF) traverse the membrane as a helical segment. The Extracellular segment spans residues 298 to 317 (NLLRDLDPRAIDPYAFGLVQ). Residues 318-338 (LLCHWLAMSSACYNPFIYAWL) traverse the membrane as a helical segment. Over 339 to 370 (HDSFREELRKMLLSWPRKIVPHGQNMTVSVVI) the chain is Cytoplasmic. A required for interaction with GRIP1, GRIP2 and PICK1 region spans residues 365–370 (TVSVVI).

Belongs to the G-protein coupled receptor 1 family. In terms of assembly, interacts through its C-terminal region with the PDZ domain-containing proteins GRIP1, GRIP2 and PICK1. Interacts with PDZ domains 4 and 5 of GRIP1 and with the PDZ domain of PICK1. In terms of tissue distribution, widely expressed, with highest levels in pituitary, cerebellum, and hypothalamus.

It localises to the cell membrane. In terms of biological role, receptor for prolactin-releasing peptide (PrRP). Implicated in lactation, regulation of food intake and pain-signal processing. This Rattus norvegicus (Rat) protein is Prolactin-releasing peptide receptor (Prlhr).